A 321-amino-acid polypeptide reads, in one-letter code: Polyprenyl transferase cle5 (321 aa).

Transmembrane regions (helical) follow at residues 26 to 46, 57 to 77, 107 to 127, 132 to 149, 159 to 179, 189 to 209, 232 to 252, 262 to 282, and 300 to 320; these read PLLA…HKIT, VLSQ…AGMV, EALV…SWML, VQAA…YPFA, IYPQ…GTLA, LWAS…WTLY, VLAG…VLGA, SQWL…GQLV, and FALG…GGNG.

Belongs to the UbiA prenyltransferase family. Mg(2+) serves as cofactor.

It is found in the membrane. It participates in secondary metabolite biosynthesis; terpenoid biosynthesis. Functionally, polyprenyl transferase; part of the cluster A that mediates the biosynthesis of chevalone E and its oxidized derivatives that possess a unique five-membered lactone ring and can synergistically enhance the cytotoxicity of doxorubicin (DOX) in breast cancer cells. Within the pathway, cle5 takes part to the biosynthesis of the molecular scaffold by catalyzing the C-3 geranylgeranylation reaction of triacetic acid lactone (TAL) produced by cle1. The molecular scaffold is commonly biosynthesized by a series of enzymes including the non-reducing polyketide synthase (NR-PKS) cle1 that produces the alpha-pyrone triacetic acid lactone (TAL); The membrane-bound prenyltransferase cle5 that accepts TAL as its substrate to perform a C-3 geranylgeranylation reaction, in which the pathway-dedicated GGPS cle6 is required to provide GGPP, the other substrate of cle5; the FAD-dependent monooxygenase Cle3 that forms an (S)-epoxide ring at the terminal olefin of the geranylgeranyl group; and the terpene cyclase Cle7 that catalyzes the cyclization of the prenyl group that yields the pentacyclic pathway intermediate chevalone E. Chevalone E can derivatize into seven new oxidized analogs by the cytochrome P450 monooxygenases cle2 (acting at C-20) and cle4 (acting at C-11 and C-12). This is Polyprenyl transferase cle5 from Aspergillus versicolor.